We begin with the raw amino-acid sequence, 150 residues long: Monothiol glutaredoxin-5, mitochondrial (150 aa).

The N-terminal 29 residues, 1 to 29 (MFLPKFNPIRSFSPILRAKTLLRYQNRMY), are a transit peptide targeting the mitochondrion. Positions 35–140 (RKAIEDAIES…DLLEEAQALV (106 aa)) constitute a Glutaredoxin domain. Position 52 (Lys-52) interacts with glutathione. Position 60 (Cys-60) interacts with [2Fe-2S] cluster. Glutathione-binding positions include 92–96 (REGIK), Ile-104, and 117–118 (CD).

Belongs to the glutaredoxin family. Monothiol subfamily. As to quaternary structure, homodimer. Interacts with SSQ1. Interacts with BOL1.

It localises to the mitochondrion matrix. Functionally, monothiol glutaredoxin involved in mitochondrial iron-sulfur (Fe/S) cluster transfer. Receives 2Fe/2S clusters from scaffold protein ISU1 and mediates their transfer to apoproteins, to the 4Fe/FS cluster biosynthesis machinery, or export from mitochondrion. This chain is Monothiol glutaredoxin-5, mitochondrial, found in Saccharomyces cerevisiae (strain ATCC 204508 / S288c) (Baker's yeast).